The sequence spans 382 residues: Hyaluronidase (382 aa).

The segment at residues 1-28 is a signal peptide (or 24); sequence MSRPLVITEGMMIGVLLMLAPINALLLG. The propeptide occupies 29 to 33; the sequence is FVQST. Cystine bridges form between Cys-54–Cys-345 and Cys-221–Cys-233. Asn-115 carries N-linked (GlcNAc...) asparagine glycosylation. Glu-145 acts as the Proton donor in catalysis. Residue Asn-263 is glycosylated (N-linked (GlcNAc...) (complex) asparagine).

This sequence belongs to the glycosyl hydrolase 56 family. In terms of assembly, homotetramer. In terms of processing, N-glycosylated. Glycans found include a majority of small oligosaccharides (Man1-3GlcNAc2), most of which are either alpha 1,3-monofucosylated or alpha 1,3-(alpha 1,6-)difucosylated at the innermost GlcNAc residue, approximately 5% of high-mannose type structures, and 8% contains the terminal trisaccharide GalNAc beta 1-4[Fuc alpha 1-3]GlcNAc beta 1-in beta 1,2-linkage to the core alpha 1,3-mannosyl residue. As to expression, expressed in the venom glands of worker bees. It is also detected in the testes of drones but not in the queen-bee venom glands or in pupae.

It localises to the secreted. The catalysed reaction is Random hydrolysis of (1-&gt;4)-linkages between N-acetyl-beta-D-glucosamine and D-glucuronate residues in hyaluronate.. Its function is as follows. Hydrolyzes high molecular weight hyaluronic acid to produce small oligosaccharides. The protein is Hyaluronidase of Apis mellifera (Honeybee).